The primary structure comprises 465 residues: Argininosuccinate lyase (465 aa).

Belongs to the lyase 1 family. Argininosuccinate lyase subfamily.

The protein localises to the cytoplasm. It catalyses the reaction 2-(N(omega)-L-arginino)succinate = fumarate + L-arginine. It functions in the pathway amino-acid biosynthesis; L-arginine biosynthesis; L-arginine from L-ornithine and carbamoyl phosphate: step 3/3. The sequence is that of Argininosuccinate lyase from Rhodopseudomonas palustris (strain ATCC BAA-98 / CGA009).